The chain runs to 215 residues: MAGRFCQRDGGIMTAMVAVEILTECSQSSWNNSLHCGVFRHLPRNRPIIIGSSGEVFWVEYTLIAVAYIVQTHIMREYPSEFALALSHNVCVSISCAFVSLFVEENNPSAWIMRSKIMLICIVATGVVNSTSYVVESWTVRYKGAVFLAMFRPLSIVTAVVLGAIFLGDSLYLGSVIGGTLISIGFSVHNSLFHIANGFSALAKSSVLRHIGMLV.

5 helical membrane-spanning segments follow: residues 48 to 68 (IIIG…AVAY), 82 to 102 (FALA…VSLF), 117 to 137 (IMLI…VVES), 146 to 166 (VFLA…GAIF), and 176 to 196 (VIGG…FHIA). Residues 65–186 (AVAYIVQTHI…IGGTLISIGF (122 aa)) form the EamA domain.

It belongs to the drug/metabolite transporter (DMT) superfamily. Plant drug/metabolite exporter (P-DME) (TC 2.A.7.4) family.

It localises to the membrane. This is WAT1-related protein At3g28060 from Arabidopsis thaliana (Mouse-ear cress).